The following is a 265-amino-acid chain: Glutamate racemase (265 aa).

Substrate contacts are provided by residues aspartate 12–serine 13 and tyrosine 44–glycine 45. Cysteine 75 functions as the Proton donor/acceptor in the catalytic mechanism. Asparagine 76–threonine 77 is a substrate binding site. Cysteine 186 serves as the catalytic Proton donor/acceptor. Threonine 187 to histidine 188 serves as a coordination point for substrate.

The protein belongs to the aspartate/glutamate racemases family.

It carries out the reaction L-glutamate = D-glutamate. The protein operates within cell wall biogenesis; peptidoglycan biosynthesis. Functionally, provides the (R)-glutamate required for cell wall biosynthesis. This chain is Glutamate racemase, found in Pseudomonas putida (strain ATCC 700007 / DSM 6899 / JCM 31910 / BCRC 17059 / LMG 24140 / F1).